The primary structure comprises 257 residues: 5'-nucleotidase SurE (257 aa).

The a divalent metal cation site is built by Asp8, Asp9, Ser40, and Asn95.

The protein belongs to the SurE nucleotidase family. Requires a divalent metal cation as cofactor.

The protein resides in the cytoplasm. The catalysed reaction is a ribonucleoside 5'-phosphate + H2O = a ribonucleoside + phosphate. Its function is as follows. Nucleotidase that shows phosphatase activity on nucleoside 5'-monophosphates. The polypeptide is 5'-nucleotidase SurE (Desulfovibrio desulfuricans (strain ATCC 27774 / DSM 6949 / MB)).